The chain runs to 626 residues: SHC-transforming protein 4 (626 aa).

Residues 1-185 (MRERSQDSQA…KQDGPPLQHL (185 aa)) form a CH2 region. Disordered stretches follow at residues 38–76 (ITSL…TVSS) and 119–182 (LQEN…GPPL). A compositionally biased stretch (polar residues) spans 120–139 (QENQDQTPSRPASPESNLNR). The region spanning 186–369 (LGNGLNYCVR…LVDGAPEDRD (184 aa)) is the PID domain. Residues 370–521 (HDYYNSIPGK…HIRQQLWDEE (152 aa)) are CH1. Tyrosine 422 bears the Phosphotyrosine mark. The SH2 domain maps to 522–613 (CFHGKLSRGA…GSEVRLKQPI (92 aa)).

In terms of assembly, interacts (via PID domain) with phosphorylated MUSK (via NPXY motif); undergoes tyrosine phosphorylation downstream of activated MUSK. Interacts with GRB2; the interaction is dependent of Tyr-422 phosphorylation and increased by EGF. Phosphorylated; the phosphorylation is enhanced by EGF. Phosphorylation at Tyr-422 is required for the interaction with GRB2. As to expression, expressed in both brain and skeletal muscle; widely expressed in brain namely olfactory bulb, cortex, hippocampus, striatum, thalamus, and brain stem (at protein level). Only expressed in melanomas. Weakly expressed in normal melanocytes and benign nevi. Highly expressed at the transition from radial growth phase to vertical growth phase and metastatic melanomas, when tumor cells acquire migratory competence and invasive potential.

It localises to the postsynaptic cell membrane. In terms of biological role, activates both Ras-dependent and Ras-independent migratory pathways in melanomas. Contributes to the early phases of agrin-induced tyrosine phosphorylation of CHRNB1. The sequence is that of SHC-transforming protein 4 (Shc4) from Mus musculus (Mouse).